The primary structure comprises 716 residues: Translation initiation factor IF-2 (716 aa).

Positions 50–136 (YKKGGARAKS…VKPKKELPEK (87 aa)) are disordered. A compositionally biased stretch (polar residues) spans 62 to 84 (PAETNKNKQPQGVNQQSAGNQPN). The segment covering 101–113 (KNKKNNNNKKNKR) has biased composition (basic residues). Over residues 114–126 (NNNNNKNQHQQKP) the composition is skewed to low complexity. In terms of domain architecture, tr-type G spans 217–386 (IRPPVVTIMG…LLVSEVEELK (170 aa)). Residues 226-233 (GHVDHGKT) form a G1 region. GTP is bound at residue 226–233 (GHVDHGKT). Residues 251–255 (GITQH) are G2. A G3 region spans residues 272–275 (DTPG). GTP is bound by residues 272-276 (DTPGH) and 326-329 (NKID). Residues 326-329 (NKID) form a G4 region. The tract at residues 362–364 (SAL) is G5.

This sequence belongs to the TRAFAC class translation factor GTPase superfamily. Classic translation factor GTPase family. IF-2 subfamily.

It localises to the cytoplasm. Its function is as follows. One of the essential components for the initiation of protein synthesis. Protects formylmethionyl-tRNA from spontaneous hydrolysis and promotes its binding to the 30S ribosomal subunits. Also involved in the hydrolysis of GTP during the formation of the 70S ribosomal complex. The protein is Translation initiation factor IF-2 (infB) of Bacillus subtilis (strain 168).